A 49-amino-acid chain; its full sequence is Large ribosomal subunit protein bL33 (49 aa).

Belongs to the bacterial ribosomal protein bL33 family.

This Carboxydothermus hydrogenoformans (strain ATCC BAA-161 / DSM 6008 / Z-2901) protein is Large ribosomal subunit protein bL33.